A 753-amino-acid chain; its full sequence is Lysyl oxidase homolog 3 (753 aa).

An N-terminal signal peptide occupies residues 1–25 (MRPVSVWQWSPWGLLLCLLCSSCLG). SRCR domains follow at residues 44-145 (FRLA…VICK) and 169-282 (VRIR…VSCV). Disulfide bonds link cysteine 70–cysteine 134, cysteine 83–cysteine 144, cysteine 114–cysteine 124, cysteine 201–cysteine 271, cysteine 214–cysteine 281, and cysteine 248–cysteine 258. Asparagine 111 carries an N-linked (GlcNAc...) asparagine glycan. Asparagine 266 carries an N-linked (GlcNAc...) asparagine glycan. A compositionally biased stretch (low complexity) spans 290–302 (SSGQKKQQQSKPQ). A disordered region spans residues 290–315 (SSGQKKQQQSKPQGEARVRLKGGAHP). 2 consecutive SRCR domains span residues 307–407 (VRLK…VRCN) and 417–525 (IRLS…VICS). 11 disulfide bridges follow: cysteine 332–cysteine 396, cysteine 345–cysteine 406, cysteine 376–cysteine 386, cysteine 446–cysteine 511, cysteine 459–cysteine 524, cysteine 492–cysteine 502, cysteine 554–cysteine 560, cysteine 606–cysteine 654, cysteine 638–cysteine 644, cysteine 666–cysteine 676, and cysteine 713–cysteine 727. Residues asparagine 390 and asparagine 481 are each glycosylated (N-linked (GlcNAc...) asparagine). The segment at 529-732 (SDLLLHSALV…WVHNCHIGDA (204 aa)) is lysyl-oxidase like. The Cu cation site is built by histidine 607, histidine 609, and histidine 611. Residue asparagine 625 is glycosylated (N-linked (GlcNAc...) asparagine). The segment at residues 634 to 670 (KASFCLEDTECQEDVSKRYECANFGEQGITVGCWDLY) is a cross-link (lysine tyrosylquinone (Lys-Tyr)). At tyrosine 670 the chain carries 2',4',5'-topaquinone.

It belongs to the lysyl oxidase family. Interacts with STAT3. Requires Cu cation as cofactor. Lysine tyrosylquinone residue is required as a cofactor. Post-translationally, the lysine tyrosylquinone cross-link (LTQ) is generated by condensation of the epsilon-amino group of a lysine with a topaquinone produced by oxidation of tyrosine. In terms of tissue distribution, isoform 1: Predominantly detected in the heart, placenta, lung, and small intestine. Isoform 2: Highly detected in the kidney, pancreas, spleen, and thymus, and is absent in lung. In eye, present in all layers of corneas as well as in the limbus and conjunctiva (at protein level).

It is found in the secreted. The protein resides in the extracellular space. The protein localises to the cytoplasm. Its subcellular location is the nucleus. The enzyme catalyses L-lysyl-[protein] + O2 + H2O = (S)-2-amino-6-oxohexanoyl-[protein] + H2O2 + NH4(+). The catalysed reaction is N(6)-acetyl-L-lysyl-[protein] + O2 + H2O = acetamide + (S)-2-amino-6-oxohexanoyl-[protein] + H2O2. Its function is as follows. Protein-lysine 6-oxidase that mediates the oxidation of peptidyl lysine residues to allysine in target proteins. Catalyzes the post-translational oxidative deamination of peptidyl lysine residues in precursors of elastin and different types of collagens, a prerequisite in the formation of cross-links between collagens and elastin. Required for somite boundary formation by catalyzing oxidation of fibronectin (FN1), enhancing integrin signaling in myofibers and their adhesion to the myotendinous junction (MTJ). Acts as a regulator of inflammatory response by inhibiting differentiation of naive CD4(+) T-cells into T-helper Th17 or regulatory T-cells (Treg): acts by interacting with STAT3 in the nucleus and catalyzing both deacetylation and oxidation of lysine residues on STAT3, leading to disrupt STAT3 dimerization and inhibit STAT3 transcription activity. Oxidation of lysine residues to allysine on STAT3 preferentially takes place on lysine residues that are acetylated. Also able to catalyze deacetylation of lysine residues on STAT3. Functionally, shows protein-lysine 6-oxidase activity toward elastin and different types of collagens, with the highest activity toward collagen type VIII. In terms of biological role, shows protein-lysine 6-oxidase activity toward elastin and different types of collagens, with the highest activity toward collagen type IV. In Homo sapiens (Human), this protein is Lysyl oxidase homolog 3.